A 752-amino-acid polypeptide reads, in one-letter code: Photosystem I P700 chlorophyll a apoprotein A1 (752 aa).

Transmembrane regions (helical) follow at residues 73–96, 159–182, 198–222, 294–312, 349–372, 388–414, 436–458, and 533–551; these read IFSA…FHGA, LYWT…FHYH, MNHH…HIAL, IAHH…GHMY, WHAQ…HHMY, LSLF…IFMV, AIIS…FYIH, and FMVH…LILL. [4Fe-4S] cluster contacts are provided by Cys-575 and Cys-584. 2 helical membrane passes run 591–612 and 666–688; these read HVFL…HFSW and SSAY…MFLF. A chlorophyll a'-binding site is contributed by His-677. Met-685 and Tyr-693 together coordinate chlorophyll a. Residue Trp-694 coordinates phylloquinone. Residues 726–746 form a helical membrane-spanning segment; sequence AVGLAHYLLGGIGTTWAFFLA.

This sequence belongs to the PsaA/PsaB family. The PsaA/B heterodimer binds the P700 chlorophyll special pair and subsequent electron acceptors. PSI consists of a core antenna complex that captures photons, and an electron transfer chain that converts photonic excitation into a charge separation. The eukaryotic PSI reaction center is composed of at least 11 subunits. It depends on P700 is a chlorophyll a/chlorophyll a' dimer, A0 is one or more chlorophyll a, A1 is one or both phylloquinones and FX is a shared 4Fe-4S iron-sulfur center. as a cofactor.

It is found in the plastid. Its subcellular location is the chloroplast thylakoid membrane. It carries out the reaction reduced [plastocyanin] + hnu + oxidized [2Fe-2S]-[ferredoxin] = oxidized [plastocyanin] + reduced [2Fe-2S]-[ferredoxin]. Its function is as follows. PsaA and PsaB bind P700, the primary electron donor of photosystem I (PSI), as well as the electron acceptors A0, A1 and FX. PSI is a plastocyanin/cytochrome c6-ferredoxin oxidoreductase, converting photonic excitation into a charge separation, which transfers an electron from the donor P700 chlorophyll pair to the spectroscopically characterized acceptors A0, A1, FX, FA and FB in turn. Oxidized P700 is reduced on the lumenal side of the thylakoid membrane by plastocyanin or cytochrome c6. The polypeptide is Photosystem I P700 chlorophyll a apoprotein A1 (Thalassiosira pseudonana (Marine diatom)).